Consider the following 302-residue polypeptide: Acetaldehyde dehydrogenase 1 (302 aa).

12–15 (SGNI) serves as a coordination point for NAD(+). C127 functions as the Acyl-thioester intermediate in the catalytic mechanism. NAD(+) is bound by residues 158-166 (SAGPGTRAN) and N277.

It belongs to the acetaldehyde dehydrogenase family.

The catalysed reaction is acetaldehyde + NAD(+) + CoA = acetyl-CoA + NADH + H(+). The chain is Acetaldehyde dehydrogenase 1 from Mycobacteroides abscessus (strain ATCC 19977 / DSM 44196 / CCUG 20993 / CIP 104536 / JCM 13569 / NCTC 13031 / TMC 1543 / L948) (Mycobacterium abscessus).